A 340-amino-acid chain; its full sequence is Pilin (340 aa).

The N-terminal stretch at 1–23 (MKLRHLLLTGAALTSFAATTVHG) is a signal peptide. 2 cross-links (isoaspartyl lysine isopeptide (Lys-Asn)) span residues 36 to 168 (KNLD…QFKN) and 179 to 303 (KKVS…TFTN). Lys161 is covalently cross-linked (Threonyl lysine isopeptide (Lys-Thr) (interchain with T-311)). The EVPTG sorting signal signature appears at 308-312 (EVPTG). A Pentaglycyl murein peptidoglycan amidated threonine; alternate modification is found at Thr311. Residue Thr311 forms a Threonyl lysine isopeptide (Thr-Lys) (interchain with K-161); alternate linkage. Positions 312 to 340 (GVAMTVAPYIALGIVAVGGALYFVKKKNA) are cleaved as a propeptide — removed by sortase C1.

It belongs to the Streptococcus pilin family. Forms columns of about 3-nanometers in diameter of head-to-tail-assembled molecules. Proteolytically processed and assembled in pili through a transpeptidation reaction catalyzed by the sortase C1. The last pilin subunit is cross-linked to the peptidoglycan.

It localises to the secreted. Its subcellular location is the cell wall. The protein resides in the fimbrium. In terms of biological role, major component of the pilus. A stack of the pilin subunits, joined by intermolecular isopeptide bonds, forms the pilus. The pilus is required for bacterial adhesion to host cells, for bacterial aggregation, and for biofilm formation. The sequence is that of Pilin from Streptococcus pyogenes serotype M1.